Consider the following 490-residue polypeptide: ATP synthase subunit beta, chloroplastic (490 aa).

Residue 170-177 participates in ATP binding; the sequence is GGAGVGKT.

It belongs to the ATPase alpha/beta chains family. As to quaternary structure, F-type ATPases have 2 components, CF(1) - the catalytic core - and CF(0) - the membrane proton channel. CF(1) has five subunits: alpha(3), beta(3), gamma(1), delta(1), epsilon(1). CF(0) has four main subunits: a(1), b(1), b'(1) and c(9-12).

The protein resides in the plastid. Its subcellular location is the chloroplast thylakoid membrane. It carries out the reaction ATP + H2O + 4 H(+)(in) = ADP + phosphate + 5 H(+)(out). Functionally, produces ATP from ADP in the presence of a proton gradient across the membrane. The catalytic sites are hosted primarily by the beta subunits. The sequence is that of ATP synthase subunit beta, chloroplastic from Convolvulus arvensis (Field bindweed).